Reading from the N-terminus, the 1097-residue chain is DNA-directed RNA polymerase subunit beta (1097 aa).

It belongs to the RNA polymerase beta chain family. In terms of assembly, in plastids the minimal PEP RNA polymerase catalytic core is composed of four subunits: alpha, beta, beta', and beta''. When a (nuclear-encoded) sigma factor is associated with the core the holoenzyme is formed, which can initiate transcription.

The protein localises to the plastid. It is found in the chloroplast. It carries out the reaction RNA(n) + a ribonucleoside 5'-triphosphate = RNA(n+1) + diphosphate. Functionally, DNA-dependent RNA polymerase catalyzes the transcription of DNA into RNA using the four ribonucleoside triphosphates as substrates. The protein is DNA-directed RNA polymerase subunit beta of Rhodomonas salina (Cryptomonas salina).